The following is a 272-amino-acid chain: Indole-3-glycerol phosphate synthase (272 aa).

The protein belongs to the TrpC family.

It catalyses the reaction 1-(2-carboxyphenylamino)-1-deoxy-D-ribulose 5-phosphate + H(+) = (1S,2R)-1-C-(indol-3-yl)glycerol 3-phosphate + CO2 + H2O. It functions in the pathway amino-acid biosynthesis; L-tryptophan biosynthesis; L-tryptophan from chorismate: step 4/5. In Mycolicibacterium smegmatis (strain ATCC 700084 / mc(2)155) (Mycobacterium smegmatis), this protein is Indole-3-glycerol phosphate synthase.